Consider the following 473-residue polypeptide: M-phase inducer phosphatase 3 (473 aa).

The segment at 1–23 (MSTELFSSTREEGSSGSGPSFRS) is disordered. Ser-2 bears the N-acetylserine mark. A phosphoserine mark is found at Ser-20 and Ser-38. Thr-48 carries the phosphothreonine modification. Phosphoserine is present on residues Ser-57, Ser-61, and Ser-64. Thr-67 carries the phosphothreonine modification. Residue Ser-122 is modified to Phosphoserine; by CDK1. Ser-129 is modified (phosphoserine). Phosphothreonine is present on Thr-130. The segment at 132–158 (NGLDRGHRKRDAMCSSSANKENDNGNL) is disordered. A compositionally biased stretch (polar residues) spans 145 to 158 (CSSSANKENDNGNL). A Phosphoserine modification is found at Ser-168. Ser-191 and Ser-198 each carry phosphoserine; by PLK3. Ser-214 is modified (phosphoserine; by CDK1). Residue Ser-216 is modified to Phosphoserine; by CHEK1, CHEK2, BRSK1, MAPK14 AND MARK3. Residues 321–428 (LIEKFYVIDC…FFPEYMELCE (108 aa)) form the Rhodanese domain. The HIV-1 Vpr binding site stretch occupies residues 334–379 (YEYLGGHIQGALNLYSQEELFNFFLKKPIVPLDTQKRIIIVFHCEF). The active site involves Cys-377. At Ser-472 the chain carries Phosphoserine.

It belongs to the MPI phosphatase family. Interacts with MAPK14 and 14-3-3 proteins. When phosphorylated on Ser-129 and/or Thr-130, interacts with PLK1. Interacts with MARK3/C-TAK1. In terms of assembly, (Microbial infection) Interacts with HIV-1 Vpr; this interaction inactivates CDC25C phosphatase activity. Post-translationally, phosphorylated by CHEK1 and MAPK14 at Ser-216. This phosphorylation creates a binding site for 14-3-3 protein and inhibits the phosphatase. Phosphorylated by PLK4. Phosphorylated by PLK1, leading to activate the phosphatase activity. Phosphorylation by PLK3 at Ser-191 promotes nuclear translocation. Ser-198 is a minor phosphorylation site. Was initially reported to be phosphorylated by PLK3 at Ser-216. However, such phosphorylation by PLK3 was not confirmed by other groups. Phosphorylation at Thr-48, Thr-67, Ser-122, Thr-130, Ser-168 and Ser-214 occurs at G2 and G2-M transition and is probably catalyzed by CDK1. Ser-168 phosphorylation levels are lower than those at the other 5 CDK1 sites. Phosphorylation by CDK1 leads to increased activity.

Its subcellular location is the nucleus. It carries out the reaction O-phospho-L-tyrosyl-[protein] + H2O = L-tyrosyl-[protein] + phosphate. Functionally, functions as a dosage-dependent inducer in mitotic control. Tyrosine protein phosphatase required for progression of the cell cycle. When phosphorylated, highly effective in activating G2 cells into prophase. Directly dephosphorylates CDK1 and activates its kinase activity. This is M-phase inducer phosphatase 3 (CDC25C) from Homo sapiens (Human).